The primary structure comprises 189 residues: Cytidylate kinase (189 aa).

An ATP-binding site is contributed by G7 to S15.

Belongs to the cytidylate kinase family. Type 2 subfamily.

The protein resides in the cytoplasm. It catalyses the reaction CMP + ATP = CDP + ADP. The catalysed reaction is dCMP + ATP = dCDP + ADP. The sequence is that of Cytidylate kinase from Saccharolobus islandicus (strain L.S.2.15 / Lassen #1) (Sulfolobus islandicus).